The following is a 228-amino-acid chain: Lipoprotein-releasing system ATP-binding protein LolD (228 aa).

One can recognise an ABC transporter domain in the interval 6-228 (IKCLNVVKGY…EAGVLNKQGQ (223 aa)). ATP is bound at residue 42-49 (GASGSGKS).

The protein belongs to the ABC transporter superfamily. Lipoprotein translocase (TC 3.A.1.125) family. As to quaternary structure, the complex is composed of two ATP-binding proteins (LolD) and two transmembrane proteins (LolC and LolE).

The protein resides in the cell inner membrane. Part of the ABC transporter complex LolCDE involved in the translocation of mature outer membrane-directed lipoproteins, from the inner membrane to the periplasmic chaperone, LolA. Responsible for the formation of the LolA-lipoprotein complex in an ATP-dependent manner. In Saccharophagus degradans (strain 2-40 / ATCC 43961 / DSM 17024), this protein is Lipoprotein-releasing system ATP-binding protein LolD.